A 294-amino-acid chain; its full sequence is Deubiquitinase OTUD6B (294 aa).

Disordered stretches follow at residues 1-46 (MDEA…RKQL) and 67-120 (AFAQ…ERDE). 2 stretches are compositionally biased toward polar residues: residues 27 to 36 (KIQSMKNSVP) and 73 to 86 (PEPT…NGVT). Residues 111–120 (KAAQEKERDE) are compositionally biased toward basic and acidic residues. Residues 150 to 287 (LQIRQIPSDG…GEHYNSVELL (138 aa)) enclose the OTU domain. Residues 155–161 (IPSDGHC) are cys-loop. D158 is a catalytic residue. Residue C161 is the Nucleophile of the active site. Positions 222–232 (IVNTPAWGGQL) are variable-loop. The interval 270-280 (YMRHAYGLGEH) is his-loop. The active site involves H280.

It carries out the reaction Thiol-dependent hydrolysis of ester, thioester, amide, peptide and isopeptide bonds formed by the C-terminal Gly of ubiquitin (a 76-residue protein attached to proteins as an intracellular targeting signal).. Its function is as follows. Deubiquitinating enzyme that may play a role in the ubiquitin-dependent regulation of different cellular processes. In Xenopus tropicalis (Western clawed frog), this protein is Deubiquitinase OTUD6B (otud6b).